Consider the following 63-residue polypeptide: Phylloseptin-Az1 (63 aa).

The first 19 residues, 1–19 (LKKSLFLVVFLGLATLSIC), serve as a signal peptide directing secretion. A propeptide spanning residues 20–41 (EEEKRETEEEEYNQGEDDKSEE) is cleaved from the precursor. Phenylalanine amide is present on Phe-62.

In terms of tissue distribution, expressed by the skin glands.

The protein resides in the secreted. In terms of biological role, has antimicrobial activity. This is Phylloseptin-Az1 from Pithecopus azureus (Orange-legged monkey tree frog).